We begin with the raw amino-acid sequence, 257 residues long: Acetylglutamate kinase (257 aa).

Residues 43–44 (GG), Arg-65, and Asn-157 each bind substrate. ATP-binding positions include 180–185 (DVSGIL) and 208–210 (IIT).

Belongs to the acetylglutamate kinase family. ArgB subfamily. In terms of assembly, homodimer.

The protein resides in the cytoplasm. It catalyses the reaction N-acetyl-L-glutamate + ATP = N-acetyl-L-glutamyl 5-phosphate + ADP. It functions in the pathway amino-acid biosynthesis; L-arginine biosynthesis; N(2)-acetyl-L-ornithine from L-glutamate: step 2/4. In terms of biological role, catalyzes the ATP-dependent phosphorylation of N-acetyl-L-glutamate. This is Acetylglutamate kinase from Salmonella agona (strain SL483).